Consider the following 312-residue polypeptide: Porphobilinogen deaminase (312 aa).

Cysteine 241 bears the S-(dipyrrolylmethanemethyl)cysteine mark.

This sequence belongs to the HMBS family. As to quaternary structure, monomer. It depends on dipyrromethane as a cofactor.

It catalyses the reaction 4 porphobilinogen + H2O = hydroxymethylbilane + 4 NH4(+). It participates in porphyrin-containing compound metabolism; protoporphyrin-IX biosynthesis; coproporphyrinogen-III from 5-aminolevulinate: step 2/4. It functions in the pathway porphyrin-containing compound metabolism; chlorophyll biosynthesis. Tetrapolymerization of the monopyrrole PBG into the hydroxymethylbilane pre-uroporphyrinogen in several discrete steps. This Prosthecochloris aestuarii (strain DSM 271 / SK 413) protein is Porphobilinogen deaminase.